Here is a 535-residue protein sequence, read N- to C-terminus: Bifunctional purine biosynthesis protein PurH (535 aa).

Residues 6–151 (TRLPVRRALI…KNHKDVAIVV (146 aa)) enclose the MGS-like domain.

The protein belongs to the PurH family.

It catalyses the reaction (6R)-10-formyltetrahydrofolate + 5-amino-1-(5-phospho-beta-D-ribosyl)imidazole-4-carboxamide = 5-formamido-1-(5-phospho-D-ribosyl)imidazole-4-carboxamide + (6S)-5,6,7,8-tetrahydrofolate. The enzyme catalyses IMP + H2O = 5-formamido-1-(5-phospho-D-ribosyl)imidazole-4-carboxamide. It functions in the pathway purine metabolism; IMP biosynthesis via de novo pathway; 5-formamido-1-(5-phospho-D-ribosyl)imidazole-4-carboxamide from 5-amino-1-(5-phospho-D-ribosyl)imidazole-4-carboxamide (10-formyl THF route): step 1/1. Its pathway is purine metabolism; IMP biosynthesis via de novo pathway; IMP from 5-formamido-1-(5-phospho-D-ribosyl)imidazole-4-carboxamide: step 1/1. This is Bifunctional purine biosynthesis protein PurH from Azotobacter vinelandii (strain DJ / ATCC BAA-1303).